The primary structure comprises 110 residues: UPF0122 protein LMOf2365_1829 (110 aa).

This sequence belongs to the UPF0122 family.

Its function is as follows. Might take part in the signal recognition particle (SRP) pathway. This is inferred from the conservation of its genetic proximity to ftsY/ffh. May be a regulatory protein. The protein is UPF0122 protein LMOf2365_1829 of Listeria monocytogenes serotype 4b (strain F2365).